A 397-amino-acid chain; its full sequence is 1-deoxy-D-xylulose 5-phosphate reductoisomerase (397 aa).

Positions 10, 11, 12, 13, 36, 37, and 124 each coordinate NADPH. Lysine 125 provides a ligand contact to 1-deoxy-D-xylulose 5-phosphate. Residue glutamate 126 participates in NADPH binding. Aspartate 150 is a binding site for Mn(2+). Residues serine 151, glutamate 152, serine 186, and histidine 209 each coordinate 1-deoxy-D-xylulose 5-phosphate. Glutamate 152 lines the Mn(2+) pocket. Glycine 215 lines the NADPH pocket. Positions 222, 227, 228, and 231 each coordinate 1-deoxy-D-xylulose 5-phosphate. Position 231 (glutamate 231) interacts with Mn(2+).

This sequence belongs to the DXR family. Requires Mg(2+) as cofactor. It depends on Mn(2+) as a cofactor.

It catalyses the reaction 2-C-methyl-D-erythritol 4-phosphate + NADP(+) = 1-deoxy-D-xylulose 5-phosphate + NADPH + H(+). The protein operates within isoprenoid biosynthesis; isopentenyl diphosphate biosynthesis via DXP pathway; isopentenyl diphosphate from 1-deoxy-D-xylulose 5-phosphate: step 1/6. In terms of biological role, catalyzes the NADPH-dependent rearrangement and reduction of 1-deoxy-D-xylulose-5-phosphate (DXP) to 2-C-methyl-D-erythritol 4-phosphate (MEP). This Aeromonas salmonicida (strain A449) protein is 1-deoxy-D-xylulose 5-phosphate reductoisomerase.